Consider the following 95-residue polypeptide: MNIRPLQDRVLVRRAEEEKKSAGGIILTGNAQEKPSQGEVVAVGNGKKLDNGTTLPMDVKVGDKVLFGKYSGSEVKVGDETLLMMREEDIMGIIA.

Belongs to the GroES chaperonin family. In terms of assembly, heptamer of 7 subunits arranged in a ring. Interacts with the chaperonin GroEL.

It is found in the cytoplasm. In terms of biological role, together with the chaperonin GroEL, plays an essential role in assisting protein folding. The GroEL-GroES system forms a nano-cage that allows encapsulation of the non-native substrate proteins and provides a physical environment optimized to promote and accelerate protein folding. GroES binds to the apical surface of the GroEL ring, thereby capping the opening of the GroEL channel. The sequence is that of Co-chaperonin GroES from Francisella tularensis subsp. holarctica (strain FTNF002-00 / FTA).